The chain runs to 190 residues: MTETPNTSSEEIQTSEPSPDNELQVLQQENANLKAELQEQNDRYLMALAEAENSRKRLQKERTEMMQYAVENALMDFLPPIESMEKALGFASQTSEEVKNWAIGFQMILQQFKQIFEEKGVVEYSSKGELFNPYLHEAVEIEETTTIPEGTILEEFTKGYKIGDRPIRVAKVKVAKLPAKGNSDSNEEKE.

A compositionally biased stretch (polar residues) spans 1-18 (MTETPNTSSEEIQTSEPS). The segment at 1–21 (MTETPNTSSEEIQTSEPSPDN) is disordered.

It belongs to the GrpE family. Homodimer.

The protein localises to the cytoplasm. Its function is as follows. Participates actively in the response to hyperosmotic and heat shock by preventing the aggregation of stress-denatured proteins, in association with DnaK and GrpE. It is the nucleotide exchange factor for DnaK and may function as a thermosensor. Unfolded proteins bind initially to DnaJ; upon interaction with the DnaJ-bound protein, DnaK hydrolyzes its bound ATP, resulting in the formation of a stable complex. GrpE releases ADP from DnaK; ATP binding to DnaK triggers the release of the substrate protein, thus completing the reaction cycle. Several rounds of ATP-dependent interactions between DnaJ, DnaK and GrpE are required for fully efficient folding. The sequence is that of Protein GrpE from Chlamydia trachomatis serovar L2 (strain ATCC VR-902B / DSM 19102 / 434/Bu).